We begin with the raw amino-acid sequence, 255 residues long: Ribosomal RNA small subunit methyltransferase G (255 aa).

The segment at 1–44 (MSSPGRPKGEYRSAQHAGAVAGPPGRPDGEHRGSSGADPNGRLR) is disordered. Residues G118, L123, 169 to 170 (VE), and R183 contribute to the S-adenosyl-L-methionine site.

This sequence belongs to the methyltransferase superfamily. RNA methyltransferase RsmG family.

Its subcellular location is the cytoplasm. It carries out the reaction guanosine(527) in 16S rRNA + S-adenosyl-L-methionine = N(7)-methylguanosine(527) in 16S rRNA + S-adenosyl-L-homocysteine. Functionally, specifically methylates the N7 position of guanine in position 527 of 16S rRNA. This is Ribosomal RNA small subunit methyltransferase G from Bordetella petrii (strain ATCC BAA-461 / DSM 12804 / CCUG 43448).